Reading from the N-terminus, the 186-residue chain is Large ribosomal subunit protein uL10 (186 aa).

Belongs to the universal ribosomal protein uL10 family. As to quaternary structure, part of the ribosomal stalk of the 50S ribosomal subunit. The N-terminus interacts with L11 and the large rRNA to form the base of the stalk. The C-terminus forms an elongated spine to which L12 dimers bind in a sequential fashion forming a multimeric L10(L12)X complex.

Its function is as follows. Forms part of the ribosomal stalk, playing a central role in the interaction of the ribosome with GTP-bound translation factors. The polypeptide is Large ribosomal subunit protein uL10 (Roseiflexus sp. (strain RS-1)).